An 860-amino-acid polypeptide reads, in one-letter code: Leucine--tRNA ligase (860 aa).

A 'HIGH' region motif is present at residues 42–52 (PYPSGRLHMGH). The short motif at 619–623 (KMSKS) is the 'KMSKS' region element. Residue Lys622 participates in ATP binding.

The protein belongs to the class-I aminoacyl-tRNA synthetase family.

It is found in the cytoplasm. The catalysed reaction is tRNA(Leu) + L-leucine + ATP = L-leucyl-tRNA(Leu) + AMP + diphosphate. This is Leucine--tRNA ligase from Serratia proteamaculans (strain 568).